We begin with the raw amino-acid sequence, 463 residues long: Mitochondrial dynamics protein MID51 (463 aa).

The Mitochondrial intermembrane segment spans residues 1–23 (MAGAGERKGKKDDNGIGTAIDFV). Residues 24 to 46 (LSNARLVLGVGGAAMLGIATLAV) form a helical membrane-spanning segment. At 47 to 463 (KRMYDRAISA…LSEPEVLLQT (417 aa)) the chain is on the cytoplasmic side. Residues 49–195 (MYDRAISAPT…LSGSLYDDLQ (147 aa)) form a dimerization region. Residues serine 55, serine 59, serine 79, and serine 94 each carry the phosphoserine modification. Residues 57-77 (PTSPTRLSHSGKRSWEEPNWM) form a disordered region. The tract at residues 160–169 (AAVDICAELR) is important for interaction with DNM1L. 3 residues coordinate ADP: serine 187, serine 189, and histidine 201. The important for interaction with DNM1L stretch occupies residues 234–243 (RRENPEYFPR). Residues serine 340, arginine 342, and lysine 368 each coordinate ADP.

This sequence belongs to the MID49/MID51 family. As to quaternary structure, homodimer. Interacts with DNM1L.

Its subcellular location is the mitochondrion outer membrane. Functionally, mitochondrial outer membrane protein which regulates mitochondrial fission/fusion dynamics. Promotes the recruitment and association of the fission mediator dynamin-related protein 1 (DNM1L) to the mitochondrial surface independently of the mitochondrial fission FIS1 and MFF proteins. Regulates DNM1L GTPase activity and DNM1L oligomerization. Binds ADP and can also bind GDP, although with lower affinity. Does not bind CDP, UDP, ATP, AMP or GTP. Inhibits DNM1L GTPase activity in the absence of bound ADP. Requires ADP to stimulate DNM1L GTPase activity and the assembly of DNM1L into long, oligomeric tubules with a spiral pattern, as opposed to the ring-like DNM1L oligomers observed in the absence of bound ADP. Does not require ADP for its function in recruiting DNM1L. This chain is Mitochondrial dynamics protein MID51 (Mief1), found in Mus musculus (Mouse).